Consider the following 1274-residue polypeptide: Protein ECM30 (1274 aa).

Disordered regions lie at residues 23–42 (EDAD…SLSV), 405–439 (RRAV…QTKP), and 494–517 (SSSS…DTSN). 3 stretches are compositionally biased toward low complexity: residues 27-42 (ASSP…SLSV), 409-432 (STSS…AAYH), and 494-515 (SSSS…SNDT). A Phosphoserine modification is found at Ser-635. Over residues 803 to 822 (NQQHQNQQQGQNDNRGQNQN) the composition is skewed to low complexity. A disordered region spans residues 803–842 (NQQHQNQQQGQNDNRGQNQNEDPGQENESPTPYLLFNPAS). Ser-1065 carries the phosphoserine modification. The segment at 1100–1149 (HLRSSSSSSSITLEKTTSNSSSIRTRPNSHHVAPETNNNNSTNGNSNNSS) is disordered. Over residues 1110 to 1125 (ITLEKTTSNSSSIRTR) the composition is skewed to polar residues. Residues 1135-1149 (TNNNNSTNGNSNNSS) show a composition bias toward low complexity.

It localises to the cytoplasm. In terms of biological role, seems to be involved in cell wall organization and biogenesis. In Saccharomyces cerevisiae (strain ATCC 204508 / S288c) (Baker's yeast), this protein is Protein ECM30 (ECM30).